We begin with the raw amino-acid sequence, 193 residues long: V-type ATP synthase subunit E (193 aa).

It belongs to the V-ATPase E subunit family.

In terms of biological role, produces ATP from ADP in the presence of a proton gradient across the membrane. In Anaeromyxobacter sp. (strain Fw109-5), this protein is V-type ATP synthase subunit E.